The sequence spans 217 residues: Glutathione S-transferase B (217 aa).

One can recognise a GST N-terminal domain in the interval 1 to 87 (PMTLGYWNIR…YIARKHNLCG (87 aa)). Glutathione-binding positions include 6 to 7 (YW), 45 to 49 (WLNEK), 58 to 59 (NL), and 71 to 72 (QS). The GST C-terminal domain occupies 89 to 207 (TEEETIRMDI…KSSRFLPKPL (119 aa)). Position 115 (Tyr-115) interacts with substrate.

It belongs to the GST superfamily. Mu family. As to quaternary structure, homodimer.

The protein resides in the cytoplasm. The enzyme catalyses RX + glutathione = an S-substituted glutathione + a halide anion + H(+). It catalyses the reaction prostaglandin A2 + glutathione = prostaglandin A2-S-(R)-glutathione. The catalysed reaction is prostaglandin J2 + glutathione = prostaglandin J2-S-(R)-glutathione. It carries out the reaction prostaglandin J2 + glutathione = prostaglandin J2-S-(S)-glutathione. The enzyme catalyses prostaglandin A2 + glutathione = prostaglandin A2-S-(S)-glutathione. It catalyses the reaction 11(S)-hydroxy-14(S),15(S)-epoxy-(5Z,8Z,12E)-eicosatrienoate + glutathione = (11S,15S)-dihydroxy-14(R)-S-glutathionyl-(5Z,8Z,12E)-eicosatrienoate. Conjugation of reduced glutathione to a wide number of exogenous and endogenous hydrophobic electrophiles. Involved in the formation of glutathione conjugates of both prostaglandin A2 (PGA2) and prostaglandin J2 (PGJ2). Participates in the formation of novel hepoxilin regioisomers. The polypeptide is Glutathione S-transferase B (GSTM1) (Cavia porcellus (Guinea pig)).